Here is a 226-residue protein sequence, read N- to C-terminus: Gap junction beta-2 protein (226 aa).

The Cytoplasmic portion of the chain corresponds to Met-1–Ile-20. A helical transmembrane segment spans residues Gly-21–Ala-40. Topologically, residues Lys-41–Arg-75 are extracellular. Intrachain disulfides connect Cys-53/Cys-180, Cys-60/Cys-174, and Cys-64/Cys-169. The chain crosses the membrane as a helical span at residues Leu-76–Tyr-98. Topologically, residues Arg-99–Ser-131 are cytoplasmic. A helical transmembrane segment spans residues Leu-132–Phe-154. The Extracellular segment spans residues Tyr-155–Thr-192. The chain crosses the membrane as a helical span at residues Val-193–Ile-215. Residues Arg-216–Val-226 are Cytoplasmic-facing.

The protein belongs to the connexin family. As to quaternary structure, a connexon is composed of a hexamer of connexins. Interacts with CNST.

The protein resides in the cell membrane. The protein localises to the cell junction. Its subcellular location is the gap junction. One gap junction consists of a cluster of closely packed pairs of transmembrane channels, the connexons, through which materials of low MW diffuse from one cell to a neighboring cell. The protein is Gap junction beta-2 protein (GJB2) of Bos taurus (Bovine).